The primary structure comprises 156 residues: Aspartate carbamoyltransferase regulatory chain (156 aa).

Positions 109, 114, 138, and 141 each coordinate Zn(2+).

It belongs to the PyrI family. As to quaternary structure, contains catalytic and regulatory chains. Zn(2+) is required as a cofactor.

Functionally, involved in allosteric regulation of aspartate carbamoyltransferase. This chain is Aspartate carbamoyltransferase regulatory chain, found in Baumannia cicadellinicola subsp. Homalodisca coagulata.